We begin with the raw amino-acid sequence, 355 residues long: MQPRDLSHHVAYEAGRGIEEVARELGLDPDDLVKLSSNENPFGPSPKAAEAIREHADRVNSYPKAAATDLRGEIGDLLSVDAAQVWLGNGGDGALDYLARAMLDPDDGVLVPDPGFAYYGMSARYHHGQVNSYPIEKDDDFEQSPDAILESYDGERIVYLTSPHNPTGSEVSLSDVEAVAEGTDEETLVVVDEAYGEFADSPSAVALVEERDDVAVLRTFSKAYGLAGVRLGYAVVPGEWADAYARVNTPFAASEIACRAGLAALEDDAHVEKTVETARWAREYIRSTLECRTYESAGNFVLCAVGDGGEVAEAAQKEGVIVRDTTSFGLPSCIRITCGTREETKRAVEVVNDLL.

Lysine 222 is subject to N6-(pyridoxal phosphate)lysine.

It belongs to the class-II pyridoxal-phosphate-dependent aminotransferase family. Histidinol-phosphate aminotransferase subfamily. Pyridoxal 5'-phosphate is required as a cofactor.

The enzyme catalyses L-histidinol phosphate + 2-oxoglutarate = 3-(imidazol-4-yl)-2-oxopropyl phosphate + L-glutamate. It participates in amino-acid biosynthesis; L-histidine biosynthesis; L-histidine from 5-phospho-alpha-D-ribose 1-diphosphate: step 7/9. This chain is Histidinol-phosphate aminotransferase, found in Natronomonas pharaonis (strain ATCC 35678 / DSM 2160 / CIP 103997 / JCM 8858 / NBRC 14720 / NCIMB 2260 / Gabara) (Halobacterium pharaonis).